The sequence spans 83 residues: Mitochondrial import inner membrane translocase subunit Tim8 (83 aa).

The short motif at 35–60 (CWDVCFADYRPPSKMDGKTQTCIQNC) is the Twin CX3C motif element. Disulfide bonds link Cys-35-Cys-60 and Cys-39-Cys-56.

The protein belongs to the small Tim family. As to quaternary structure, heterohexamer; composed of 3 copies of ddp-1/tim-8 and 3 copies of tin-13/tim-13, named soluble 70 kDa complex. Associates with the TIM22 complex, whose core is composed of tim-22.

The protein localises to the mitochondrion inner membrane. Mitochondrial intermembrane chaperone that participates in the import and insertion of some multi-pass transmembrane proteins into the mitochondrial inner membrane. Also required for the transfer of beta-barrel precursors from the TOM complex to the sorting and assembly machinery (SAM complex) of the outer membrane. Acts as a chaperone-like protein that protects the hydrophobic precursors from aggregation and guide them through the mitochondrial intermembrane space. The ddp-1/tim-8-tim-13 complex mediates the import of some proteins while the predominant tim-9/tin-9.1-tim-10/tin-10 70 kDa complex mediates the import of much more proteins. The protein is Mitochondrial import inner membrane translocase subunit Tim8 of Caenorhabditis elegans.